Consider the following 114-residue polypeptide: Putative pterin-4-alpha-carbinolamine dehydratase (114 aa).

The protein belongs to the pterin-4-alpha-carbinolamine dehydratase family.

The enzyme catalyses (4aS,6R)-4a-hydroxy-L-erythro-5,6,7,8-tetrahydrobiopterin = (6R)-L-erythro-6,7-dihydrobiopterin + H2O. This is Putative pterin-4-alpha-carbinolamine dehydratase from Pseudoalteromonas translucida (strain TAC 125).